We begin with the raw amino-acid sequence, 419 residues long: BTB/POZ domain-containing protein KCTD20 (419 aa).

The BTB domain maps to Glu117–Asp191.

Interacts with AKT1; AKT2 and AKT3. Interacts with PPP2CA and PPP1CA. Part of a complex containing MARK4. Ubiquitously expressed.

The protein localises to the cytoplasm. Promotes the phosphorylation of AKT family members. In Mus musculus (Mouse), this protein is BTB/POZ domain-containing protein KCTD20 (Kctd20).